The following is a 195-amino-acid chain: MMIKWIISILTMSIMPVLVYSSSIFRFRSEDVELCYGNLYFDRIYNNVVNIKYIPEHIPYKYNFINRTFSVDELDNNVFFTHGYFLKHKYGSLNPSLIVSLSGNLKYNDIQCSVNVSCLIKNLATSISTILTSKHKTYSLHRSKCITIIGYDSIIWYKDINDKYNDIYDFTAICMLIASTLIVTIYVFKKIKMNS.

An N-terminal signal peptide occupies residues 1–21; that stretch reads MMIKWIISILTMSIMPVLVYS. Residues 23 to 166 lie on the Extracellular side of the membrane; it reads SIFRFRSEDV…YKDINDKYND (144 aa). N-linked (GlcNAc...) asparagine; by host glycans are attached at residues Asn66 and Asn115. A helical membrane pass occupies residues 167–187; it reads IYDFTAICMLIASTLIVTIYV. Over 188–195 the chain is Cytoplasmic; it reads FKKIKMNS.

The protein belongs to the orthopoxvirus OPG172 protein family.

Its subcellular location is the host membrane. The protein resides in the host cell surface. The sequence is that of Protein A43 (OPG172) from Homo sapiens (Human).